Reading from the N-terminus, the 627-residue chain is UvrABC system protein C (627 aa).

A GIY-YIG domain is found at 26 to 105 (PEPGVYFMRD…IKQHQPYFNV (80 aa)). The 36-residue stretch at 215–250 (QELIDILSEQMEKAAEALNFEVAARIRDQIAGLKSL) folds into the UVR domain.

The protein belongs to the UvrC family. Interacts with UvrB in an incision complex.

Its subcellular location is the cytoplasm. Its function is as follows. The UvrABC repair system catalyzes the recognition and processing of DNA lesions. UvrC both incises the 5' and 3' sides of the lesion. The N-terminal half is responsible for the 3' incision and the C-terminal half is responsible for the 5' incision. The polypeptide is UvrABC system protein C (Trichormus variabilis (strain ATCC 29413 / PCC 7937) (Anabaena variabilis)).